Reading from the N-terminus, the 465-residue chain is 3-isopropylmalate dehydratase large subunit (465 aa).

[4Fe-4S] cluster contacts are provided by C347, C407, and C410. The disordered stretch occupies residues 416–443 (DTLRPGERSASTSNRNFEGRQGPGGRTH).

Belongs to the aconitase/IPM isomerase family. LeuC type 1 subfamily. As to quaternary structure, heterodimer of LeuC and LeuD. Requires [4Fe-4S] cluster as cofactor.

It catalyses the reaction (2R,3S)-3-isopropylmalate = (2S)-2-isopropylmalate. It participates in amino-acid biosynthesis; L-leucine biosynthesis; L-leucine from 3-methyl-2-oxobutanoate: step 2/4. Functionally, catalyzes the isomerization between 2-isopropylmalate and 3-isopropylmalate, via the formation of 2-isopropylmaleate. This Frankia casuarinae (strain DSM 45818 / CECT 9043 / HFP020203 / CcI3) protein is 3-isopropylmalate dehydratase large subunit.